Reading from the N-terminus, the 471-residue chain is ATP synthase subunit beta (471 aa).

An ATP-binding site is contributed by 152 to 159 (GGAGVGKT).

This sequence belongs to the ATPase alpha/beta chains family. F-type ATPases have 2 components, CF(1) - the catalytic core - and CF(0) - the membrane proton channel. CF(1) has five subunits: alpha(3), beta(3), gamma(1), delta(1), epsilon(1). CF(0) has three main subunits: a(1), b(2) and c(9-12). The alpha and beta chains form an alternating ring which encloses part of the gamma chain. CF(1) is attached to CF(0) by a central stalk formed by the gamma and epsilon chains, while a peripheral stalk is formed by the delta and b chains.

It localises to the cell membrane. The enzyme catalyses ATP + H2O + 4 H(+)(in) = ADP + phosphate + 5 H(+)(out). In terms of biological role, produces ATP from ADP in the presence of a proton gradient across the membrane. The catalytic sites are hosted primarily by the beta subunits. This is ATP synthase subunit beta from Herpetosiphon aurantiacus (strain ATCC 23779 / DSM 785 / 114-95).